Consider the following 103-residue polypeptide: Small ribosomal subunit protein bS6c (103 aa).

Belongs to the bacterial ribosomal protein bS6 family.

It localises to the plastid. It is found in the chloroplast. Its function is as follows. Binds together with bS18 to 16S ribosomal RNA. The protein is Small ribosomal subunit protein bS6c (rps6) of Cyanidium caldarium (Red alga).